A 647-amino-acid polypeptide reads, in one-letter code: Chaperone protein DnaK (647 aa).

Phosphothreonine; by autocatalysis is present on threonine 199. Residues 602–647 form a disordered region; it reads MYAQEQAQAGQQAGPGAGSASAGQSGEKPVEGEVVDAEFEEVKDKK. The span at 604 to 627 shows a compositional bias: low complexity; sequence AQEQAQAGQQAGPGAGSASAGQSG.

This sequence belongs to the heat shock protein 70 family.

In terms of biological role, acts as a chaperone. The sequence is that of Chaperone protein DnaK from Nitrosomonas eutropha (strain DSM 101675 / C91 / Nm57).